The chain runs to 388 residues: 3-ketoacyl-CoA thiolase (388 aa).

The Acyl-thioester intermediate role is filled by cysteine 91. Active-site proton acceptor residues include histidine 343 and cysteine 373.

The protein belongs to the thiolase-like superfamily. Thiolase family. In terms of assembly, heterotetramer of two alpha chains (FadB) and two beta chains (FadA).

Its subcellular location is the cytoplasm. It carries out the reaction an acyl-CoA + acetyl-CoA = a 3-oxoacyl-CoA + CoA. It participates in lipid metabolism; fatty acid beta-oxidation. In terms of biological role, catalyzes the final step of fatty acid oxidation in which acetyl-CoA is released and the CoA ester of a fatty acid two carbons shorter is formed. This is 3-ketoacyl-CoA thiolase from Photorhabdus laumondii subsp. laumondii (strain DSM 15139 / CIP 105565 / TT01) (Photorhabdus luminescens subsp. laumondii).